The chain runs to 181 residues: Cytochrome c-type biogenesis protein CcmE (181 aa).

Topologically, residues 1-8 (MNPRRKSR) are cytoplasmic. The chain crosses the membrane as a helical; Signal-anchor for type II membrane protein span at residues 9–29 (LKVVVSIIFGVAVAAGLTLYA). The Periplasmic portion of the chain corresponds to 30-181 (LSQNIDLFYT…TLKTLQGEAN (152 aa)). Residues H131 and Y135 each coordinate heme. Composition is skewed to basic and acidic residues over residues 135-148 (YMPP…KEQH) and 156-166 (ADLKGTSARDK). A disordered region spans residues 135-166 (YMPPELGDKLKEQHGAAGISEADLKGTSARDK).

This sequence belongs to the CcmE/CycJ family.

It is found in the cell inner membrane. Heme chaperone required for the biogenesis of c-type cytochromes. Transiently binds heme delivered by CcmC and transfers the heme to apo-cytochromes in a process facilitated by CcmF and CcmH. In Actinobacillus pleuropneumoniae serotype 7 (strain AP76), this protein is Cytochrome c-type biogenesis protein CcmE.